We begin with the raw amino-acid sequence, 266 residues long: Aliphatic sulfonates import ATP-binding protein SsuB (266 aa).

One can recognise an ABC transporter domain in the interval 23–244 (LALDAITKHY…RRGSAKLAEL (222 aa)). ATP is bound at residue 55 to 62 (GRSGCGKS).

The protein belongs to the ABC transporter superfamily. Aliphatic sulfonates importer (TC 3.A.1.17.2) family. The complex is composed of two ATP-binding proteins (SsuB), two transmembrane proteins (SsuC) and a solute-binding protein (SsuA).

It localises to the cell inner membrane. It catalyses the reaction ATP + H2O + aliphatic sulfonate-[sulfonate-binding protein]Side 1 = ADP + phosphate + aliphatic sulfonateSide 2 + [sulfonate-binding protein]Side 1.. Part of the ABC transporter complex SsuABC involved in aliphatic sulfonates import. Responsible for energy coupling to the transport system. In Pectobacterium atrosepticum (strain SCRI 1043 / ATCC BAA-672) (Erwinia carotovora subsp. atroseptica), this protein is Aliphatic sulfonates import ATP-binding protein SsuB.